Reading from the N-terminus, the 40-residue chain is INFGAIKAILKKWGKKLVEYALKHKDLYAPYIKKHLCEKL.

It belongs to the ectatomin family. Ectatomin-Eq subfamily. Heterodimer of subunits A and B; disulfide-linked. As to expression, expressed by the venom gland.

The protein resides in the secreted. The protein localises to the target cell membrane. In Ectatomma brunneum (Ant), this protein is U1-ectatotoxin-Eb1a subunit A.